We begin with the raw amino-acid sequence, 422 residues long: GTPase Obg (422 aa).

The Obg domain maps to 4 to 161 (LHFVDEAFNE…FKIKTELKVL (158 aa)). One can recognise an OBG-type G domain in the interval 162 to 327 (ADIGLLGFPS…LKYEMSSLLQ (166 aa)). Residues 168–175 (GFPSVGKS), 193–197 (FTTIK), 214–217 (DLPG), 281–284 (NKMD), and 308–310 (SLV) contribute to the GTP site. 2 residues coordinate Mg(2+): S175 and T195. The OCT domain maps to 345-422 (TLPDNQNTIS…KICDRLFYFL (78 aa)).

The protein belongs to the TRAFAC class OBG-HflX-like GTPase superfamily. OBG GTPase family. Monomer. Mg(2+) is required as a cofactor.

Its subcellular location is the cytoplasm. In terms of biological role, an essential GTPase which binds GTP, GDP and possibly (p)ppGpp with moderate affinity, with high nucleotide exchange rates and a fairly low GTP hydrolysis rate. Plays a role in control of the cell cycle, stress response, ribosome biogenesis and in those bacteria that undergo differentiation, in morphogenesis control. This is GTPase Obg from Onion yellows phytoplasma (strain OY-M).